The sequence spans 311 residues: 4-hydroxy-3-methylbut-2-enyl diphosphate reductase (311 aa).

Cys-12 lines the [4Fe-4S] cluster pocket. Residues His-41 and His-74 each contribute to the (2E)-4-hydroxy-3-methylbut-2-enyl diphosphate site. 2 residues coordinate dimethylallyl diphosphate: His-41 and His-74. His-41 and His-74 together coordinate isopentenyl diphosphate. Cys-96 provides a ligand contact to [4Fe-4S] cluster. His-124 lines the (2E)-4-hydroxy-3-methylbut-2-enyl diphosphate pocket. Residue His-124 coordinates dimethylallyl diphosphate. His-124 lines the isopentenyl diphosphate pocket. The active-site Proton donor is the Glu-126. Thr-168 lines the (2E)-4-hydroxy-3-methylbut-2-enyl diphosphate pocket. Cys-198 provides a ligand contact to [4Fe-4S] cluster. The (2E)-4-hydroxy-3-methylbut-2-enyl diphosphate site is built by Ser-226, Ser-227, Asn-228, and Ser-270. The dimethylallyl diphosphate site is built by Ser-226, Ser-227, Asn-228, and Ser-270. Residues Ser-226, Ser-227, Asn-228, and Ser-270 each contribute to the isopentenyl diphosphate site.

It belongs to the IspH family. It depends on [4Fe-4S] cluster as a cofactor.

It carries out the reaction isopentenyl diphosphate + 2 oxidized [2Fe-2S]-[ferredoxin] + H2O = (2E)-4-hydroxy-3-methylbut-2-enyl diphosphate + 2 reduced [2Fe-2S]-[ferredoxin] + 2 H(+). The catalysed reaction is dimethylallyl diphosphate + 2 oxidized [2Fe-2S]-[ferredoxin] + H2O = (2E)-4-hydroxy-3-methylbut-2-enyl diphosphate + 2 reduced [2Fe-2S]-[ferredoxin] + 2 H(+). It participates in isoprenoid biosynthesis; dimethylallyl diphosphate biosynthesis; dimethylallyl diphosphate from (2E)-4-hydroxy-3-methylbutenyl diphosphate: step 1/1. The protein operates within isoprenoid biosynthesis; isopentenyl diphosphate biosynthesis via DXP pathway; isopentenyl diphosphate from 1-deoxy-D-xylulose 5-phosphate: step 6/6. Functionally, catalyzes the conversion of 1-hydroxy-2-methyl-2-(E)-butenyl 4-diphosphate (HMBPP) into a mixture of isopentenyl diphosphate (IPP) and dimethylallyl diphosphate (DMAPP). Acts in the terminal step of the DOXP/MEP pathway for isoprenoid precursor biosynthesis. This Alcanivorax borkumensis (strain ATCC 700651 / DSM 11573 / NCIMB 13689 / SK2) protein is 4-hydroxy-3-methylbut-2-enyl diphosphate reductase.